The sequence spans 123 residues: Small ribosomal subunit protein uS13 (123 aa).

The interval 92–123 is disordered; it reads RKGLPVRGQKTKTNARTRKGPKKLVGAKKKSK.

This sequence belongs to the universal ribosomal protein uS13 family. As to quaternary structure, part of the 30S ribosomal subunit. Forms a loose heterodimer with protein S19. Forms two bridges to the 50S subunit in the 70S ribosome.

Its function is as follows. Located at the top of the head of the 30S subunit, it contacts several helices of the 16S rRNA. In the 70S ribosome it contacts the 23S rRNA (bridge B1a) and protein L5 of the 50S subunit (bridge B1b), connecting the 2 subunits; these bridges are implicated in subunit movement. Contacts the tRNAs in the A and P-sites. This is Small ribosomal subunit protein uS13 from Clostridium kluyveri (strain NBRC 12016).